A 169-amino-acid chain; its full sequence is Monothiol glutaredoxin-S15, mitochondrial (169 aa).

The transit peptide at 1–37 directs the protein to the mitochondrion; sequence MAASLSSRLIKGIANLKAVRSSRLTSASVYQNGMMRF. The disordered stretch occupies residues 38–61; the sequence is SSTVPSDSDTHDDFKPTQKVPPDS. The Glutaredoxin domain maps to 66–168; the sequence is KDIVENDVKD…QKLKDVSGNQ (103 aa). Lys83 provides a ligand contact to glutathione. Residue Cys91 coordinates [2Fe-2S] cluster. Glutathione contacts are provided by residues Lys120, Phe132, and 145 to 146; that span reads SD.

The protein belongs to the glutaredoxin family. CGFS subfamily. In terms of assembly, [2Fe-2S]-bridged holo-homodimer. Interacts in vitro with SUFE1, BOLA1, BOLA2 and BOLA4. Interacts in vivo only with BOLA4.

The protein resides in the mitochondrion. May only reduce GSH-thiol disulfides, but not protein disulfides. Participates probably to the maturation of iron-sulfur proteins and to the regulation of the redox state of the BOLA proteins. This Arabidopsis thaliana (Mouse-ear cress) protein is Monothiol glutaredoxin-S15, mitochondrial.